We begin with the raw amino-acid sequence, 254 residues long: 3-deoxy-manno-octulosonate cytidylyltransferase (254 aa).

Belongs to the KdsB family.

The protein localises to the cytoplasm. The enzyme catalyses 3-deoxy-alpha-D-manno-oct-2-ulosonate + CTP = CMP-3-deoxy-beta-D-manno-octulosonate + diphosphate. It functions in the pathway nucleotide-sugar biosynthesis; CMP-3-deoxy-D-manno-octulosonate biosynthesis; CMP-3-deoxy-D-manno-octulosonate from 3-deoxy-D-manno-octulosonate and CTP: step 1/1. It participates in bacterial outer membrane biogenesis; lipopolysaccharide biosynthesis. Its function is as follows. Activates KDO (a required 8-carbon sugar) for incorporation into bacterial lipopolysaccharide in Gram-negative bacteria. This Chlamydia abortus (strain DSM 27085 / S26/3) (Chlamydophila abortus) protein is 3-deoxy-manno-octulosonate cytidylyltransferase.